A 506-amino-acid chain; its full sequence is Maturase K (506 aa).

This sequence belongs to the intron maturase 2 family. MatK subfamily.

The protein localises to the plastid. It is found in the chloroplast. In terms of biological role, usually encoded in the trnK tRNA gene intron. Probably assists in splicing its own and other chloroplast group II introns. The sequence is that of Maturase K from Mimosa pudica (Sensitive plant).